Reading from the N-terminus, the 890-residue chain is Wolframin (890 aa).

Met1 carries the N-acetylmethionine modification. Positions Met1–Ile86 are disordered. The tract at residues Met1–Thr321 is interaction with ATP6V1A. Positions Pro10 to Gln20 are enriched in pro residues. Thr30 carries the post-translational modification Phosphothreonine; by FAM20C. Ser32 bears the Phosphoserine; by FAM20C mark. Phosphoserine is present on Ser157. A run of 10 helical transmembrane segments spans residues Trp314–Ser334, Phe340–Cys360, Leu402–Ala422, Ile427–Leu447, Ala465–Gly485, Leu496–Phe516, Cys529–Leu549, Tyr563–Leu583, Phe589–Leu609, and Met632–Tyr652. Topologically, residues Arg653–Ser869 are lumenal. Asn661 and Asn746 each carry an N-linked (GlcNAc...) asparagine glycan. A helical transmembrane segment spans residues Thr870–Ala890.

As to quaternary structure, interacts with ATP6V1A. In terms of tissue distribution, highly expressed in heart followed by brain, placenta, lung and pancreas. Weakly expressed in liver, kidney and skeletal muscle. Also expressed in islet and beta-cell insulinoma cell line.

Its subcellular location is the endoplasmic reticulum membrane. It localises to the cytoplasmic vesicle. The protein localises to the secretory vesicle. In terms of biological role, participates in the regulation of cellular Ca(2+) homeostasis, at least partly, by modulating the filling state of the endoplasmic reticulum Ca(2+) store. Negatively regulates the ER stress response and positively regulates the stability of V-ATPase subunits ATP6V1A and ATP1B1 by preventing their degradation through an unknown proteasome-independent mechanism. The chain is Wolframin (WFS1) from Homo sapiens (Human).